A 259-amino-acid polypeptide reads, in one-letter code: MLRLIKQPLFRCASSGHLMKESLVFIHQTRTFQVGKFTSNEKYNEKIEDINERSNPQWDNAGLENLLNQLQDSVEQSASDDFMGELEKKIEVENEEPPLMGTNLWPSPSSSIVGLIDRPFQVDSTVQHLVNLIMRDGKKAKAEKIVATALSIIQKETGENPIDVLKQAIAEISPLMKLVSAKRFNKSVEFPMPLKERQRRRIALQWILGECKSSSPKRLSDRIVKEIIAIRSKTSNCFKKKDHLHRMCLVNRGNAPVRI.

A mitochondrion-targeting transit peptide spans 1–39; the sequence is MLRLIKQPLFRCASSGHLMKESLVFIHQTRTFQVGKFTS. A Phosphothreonine modification is found at Thr157.

It belongs to the universal ribosomal protein uS7 family. As to quaternary structure, component of the mitochondrial small ribosomal subunit (mt-SSU). Mature yeast 74S mitochondrial ribosomes consist of a small (37S) and a large (54S) subunit. The 37S small subunit contains a 15S ribosomal RNA (15S mt-rRNA) and at least 32 different proteins. The 54S large subunit contains a 21S rRNA (21S mt-rRNA) and at least 45 different proteins.

The protein localises to the mitochondrion. Component of the mitochondrial ribosome (mitoribosome), a dedicated translation machinery responsible for the synthesis of mitochondrial genome-encoded proteins, including at least some of the essential transmembrane subunits of the mitochondrial respiratory chain. The mitoribosomes are attached to the mitochondrial inner membrane and translation products are cotranslationally integrated into the membrane. The polypeptide is Small ribosomal subunit protein uS7m (rsm7) (Schizosaccharomyces pombe (strain 972 / ATCC 24843) (Fission yeast)).